We begin with the raw amino-acid sequence, 220 residues long: Sec-independent protein translocase protein TatB (220 aa).

A helical membrane pass occupies residues 1 to 21 (MFDIGFSELLLVLVIGLVVLG). Residues 192–220 (KQQIDTIDSHGTDLSSAGPSRIHQPGGDQ) form a disordered region.

This sequence belongs to the TatB family. In terms of assembly, the Tat system comprises two distinct complexes: a TatABC complex, containing multiple copies of TatA, TatB and TatC subunits, and a separate TatA complex, containing only TatA subunits. Substrates initially bind to the TatABC complex, which probably triggers association of the separate TatA complex to form the active translocon.

Its subcellular location is the cell inner membrane. Functionally, part of the twin-arginine translocation (Tat) system that transports large folded proteins containing a characteristic twin-arginine motif in their signal peptide across membranes. Together with TatC, TatB is part of a receptor directly interacting with Tat signal peptides. TatB may form an oligomeric binding site that transiently accommodates folded Tat precursor proteins before their translocation. The sequence is that of Sec-independent protein translocase protein TatB from Yersinia pestis bv. Antiqua (strain Antiqua).